The primary structure comprises 366 residues: DNA replication and repair protein RecF (366 aa).

Residue 30 to 37 (GRNAQGKT) coordinates ATP.

This sequence belongs to the RecF family.

Its subcellular location is the cytoplasm. Its function is as follows. The RecF protein is involved in DNA metabolism; it is required for DNA replication and normal SOS inducibility. RecF binds preferentially to single-stranded, linear DNA. It also seems to bind ATP. This chain is DNA replication and repair protein RecF, found in Streptococcus thermophilus (strain ATCC BAA-250 / LMG 18311).